A 304-amino-acid polypeptide reads, in one-letter code: HPr kinase/phosphorylase (304 aa).

Residues His136 and Lys157 contribute to the active site. 151-158 serves as a coordination point for ATP; sequence GESGIGKS. Ser158 is a Mg(2+) binding site. Asp175 acts as the Proton acceptor; for phosphorylation activity. Proton donor; for dephosphorylation activity in catalysis. An important for the catalytic mechanism of both phosphorylation and dephosphorylation region spans residues 198 to 207; the sequence is LEVRGIGIID. Residue Glu199 coordinates Mg(2+). Arg240 is a catalytic residue. Residues 261–266 are important for the catalytic mechanism of dephosphorylation; the sequence is PVRPGR.

It belongs to the HPrK/P family. As to quaternary structure, homohexamer. It depends on Mg(2+) as a cofactor.

It carries out the reaction [HPr protein]-L-serine + ATP = [HPr protein]-O-phospho-L-serine + ADP + H(+). The catalysed reaction is [HPr protein]-O-phospho-L-serine + phosphate + H(+) = [HPr protein]-L-serine + diphosphate. Functionally, catalyzes the ATP- as well as the pyrophosphate-dependent phosphorylation of a specific serine residue in HPr, a phosphocarrier protein of the phosphoenolpyruvate-dependent sugar phosphotransferase system (PTS). HprK/P also catalyzes the pyrophosphate-producing, inorganic phosphate-dependent dephosphorylation (phosphorolysis) of seryl-phosphorylated HPr (P-Ser-HPr). The two antagonistic activities of HprK/P are regulated by several intracellular metabolites, which change their concentration in response to the absence or presence of rapidly metabolisable carbon sources (glucose, fructose, etc.) in the growth medium. Therefore, by controlling the phosphorylation state of HPr, HPrK/P is a sensor enzyme that plays a major role in the regulation of carbon metabolism and sugar transport: it mediates carbon catabolite repression (CCR), and regulates PTS-catalyzed carbohydrate uptake and inducer exclusion. This is HPr kinase/phosphorylase from Clostridium botulinum (strain Eklund 17B / Type B).